The primary structure comprises 963 residues: Pyruvate, phosphate dikinase 1, chloroplastic (963 aa).

Residues 1–76 constitute a chloroplast transit peptide; that stretch reads MLYIRKKMTS…GLHRETKARA (76 aa). Thr-543 bears the Phosphothreonine; by PDRP1 mark. His-545 serves as the catalytic Tele-phosphohistidine intermediate. Substrate is bound by residues Arg-651, Arg-707, Glu-836, Gly-857, Thr-858, Asn-859, and Asp-860. Glu-836 is a Mg(2+) binding site. A Mg(2+)-binding site is contributed by Asp-860. The active-site Proton donor is Cys-922.

This sequence belongs to the PEP-utilizing enzyme family. As to quaternary structure, homotetramer. Interacts with RP1 and RP2. Mg(2+) is required as a cofactor. Phosphorylation of Thr-543 in the dark inactivates the enzyme. Dephosphorylation upon light stimulation reactivates the enzyme. Isoform 1 is expressed in leaves, flowers and siliques. Isoform 2 is found in cotyledons, rosette and cauline leaves, petioles, flowers and siliques.

It localises to the plastid. The protein localises to the chloroplast. The protein resides in the cytoplasm. The catalysed reaction is pyruvate + phosphate + ATP = phosphoenolpyruvate + AMP + diphosphate + H(+). Activated by light-induced dephosphorylation. Inhibited by dark-induced phosphorylation. Both reactions are catalyzed by PDRP1. Formation of phosphoenolpyruvate. May be involved in regulating the flux of carbon into starch and fatty acids of seeds and in the remobilization of nitrogen reserves in senescing leaves. The sequence is that of Pyruvate, phosphate dikinase 1, chloroplastic (PPDK) from Arabidopsis thaliana (Mouse-ear cress).